A 693-amino-acid chain; its full sequence is MAREFSLEKTRNIGIMAHIDAGKTTTTERILYYTGRIHKIGETHEGASQMDWMEQEQDRGITITSAATTAAWEGHRVNIIDTPGHVDFTVEVERSLRVLDGAVTVLDAQSGVEPQTETVWRQATTYGVPRIVFVNKMDKLGANFEYSVSTLHDRLQANAAPIQLPIGAEDEFEAIIDLVEMKCFKYTNDLGTEIEEIEIPEDHLDRAEEARASLIEAVAETSDELMEKYLGDEEISVSELKEAIRQATTNVEFYPVLCGTAFKNKGVQLMLDAVIDYLPSPLDVKPIIGHRASNPEEEVIAKADDSAEFAALAFKVMTDPYVGKLTFFRVYSGTMTSGSYVKNSTKGKRERVGRLLQMHANSRQEIDTVYSGDIAAAVGLKDTGTGDTLCGEKNDIILESMEFPEPVIHLSVEPKSKADQDKMTQALVKLQEEDPTFHAHTDEETGQVIIGGMGELHLDILVDRMKKEFNVECNVGAPMVSYRETFKSSAQVQGKFSRQSGGRGQYGDVHIEFTPNETGAGFEFENAIVGGVVPREYIPSVEAGLKDAMENGVLAGYPLIDVKAKLYDGSYHDVDSSEMAFKIAASLALKEAAKKCDPVILEPMMKVTIEMPEEYMGDIMGDVTSRRGRVDGMEPRGNAQVVNAYVPLSEMLGYATSLRSHTQGRGTYTMYFDHYAEIPKSIAEDIIKKNKGE.

The tr-type G domain maps to glutamate 8–leucine 282. GTP-binding positions include alanine 17 to threonine 24, aspartate 81 to histidine 85, and asparagine 135 to aspartate 138.

This sequence belongs to the TRAFAC class translation factor GTPase superfamily. Classic translation factor GTPase family. EF-G/EF-2 subfamily.

The protein localises to the cytoplasm. Its function is as follows. Catalyzes the GTP-dependent ribosomal translocation step during translation elongation. During this step, the ribosome changes from the pre-translocational (PRE) to the post-translocational (POST) state as the newly formed A-site-bound peptidyl-tRNA and P-site-bound deacylated tRNA move to the P and E sites, respectively. Catalyzes the coordinated movement of the two tRNA molecules, the mRNA and conformational changes in the ribosome. The chain is Elongation factor G from Staphylococcus aureus (strain Newman).